The chain runs to 740 residues: NAD(P)H-quinone oxidoreductase subunit 5, chloroplastic (740 aa).

Helical transmembrane passes span 9 to 29 (WIIP…LFLF), 40 to 60 (WAFQ…YLSI), 89 to 109 (IDPL…MVLI), 125 to 145 (FAYM…SNLI), 147 to 167 (IYIF…FWFT), 185 to 205 (GDFG…SFEF), 219 to 239 (NEVD…GAVA), 258 to 278 (TPIS…FLVA), 286 to 306 (VIPY…LLGA), 327 to 347 (LGYM…FHLI), 354 to 374 (ALLF…VGYS), 396 to 416 (ITFL…CFWS), 425 to 445 (WLYS…TAFY), 543 to 563 (LFPI…GIPF), 602 to 622 (VLSV…YKPI), and 717 to 737 (SYLF…YLLF).

The protein belongs to the complex I subunit 5 family. As to quaternary structure, NDH is composed of at least 16 different subunits, 5 of which are encoded in the nucleus.

It localises to the plastid. Its subcellular location is the chloroplast thylakoid membrane. It catalyses the reaction a plastoquinone + NADH + (n+1) H(+)(in) = a plastoquinol + NAD(+) + n H(+)(out). The enzyme catalyses a plastoquinone + NADPH + (n+1) H(+)(in) = a plastoquinol + NADP(+) + n H(+)(out). Functionally, NDH shuttles electrons from NAD(P)H:plastoquinone, via FMN and iron-sulfur (Fe-S) centers, to quinones in the photosynthetic chain and possibly in a chloroplast respiratory chain. The immediate electron acceptor for the enzyme in this species is believed to be plastoquinone. Couples the redox reaction to proton translocation, and thus conserves the redox energy in a proton gradient. This is NAD(P)H-quinone oxidoreductase subunit 5, chloroplastic (ndhF) from Nicotiana sylvestris (Wood tobacco).